The primary structure comprises 305 residues: Catechol 1,2-dioxygenase (305 aa).

Residues Y163, Y197, H221, and H223 each contribute to the Fe cation site.

It belongs to the intradiol ring-cleavage dioxygenase family. In terms of assembly, homodimer. Fe(3+) serves as cofactor.

The enzyme catalyses catechol + O2 = cis,cis-muconate + 2 H(+). Its pathway is aromatic compound metabolism; beta-ketoadipate pathway; 5-oxo-4,5-dihydro-2-furylacetate from catechol: step 1/3. This chain is Catechol 1,2-dioxygenase (catA), found in Acinetobacter guillouiae (Acinetobacter genomosp. 11).